The primary structure comprises 272 residues: Prohibitin 1 (272 aa).

Position 2 is an N-acetylalanine (Ala-2). Thr-91 bears the Phosphothreonine mark. 2 positions are modified to N6-acetyllysine: Lys-128 and Lys-186. The stretch at 177–211 (KEFTEAVEAKQVAQQEAERARFVVEKAEQQKKAAI) forms a coiled coil. The residue at position 202 (Lys-202) is an N6-acetyllysine; alternate. N6-succinyllysine; alternate is present on Lys-202. Residue Tyr-249 is modified to Phosphotyrosine.

This sequence belongs to the prohibitin family. In terms of assembly, interacts with PHB2. Interacts with STOML2. Interacts with CD86 (via cytoplasmic domain); the interactions increases after priming with CD40. As to quaternary structure, (Microbial infection) Interacts with human enterovirus 71/EV-71 capsid protein VP0, protein 3CD and protease 3C. As to expression, widely expressed in different tissues.

Its subcellular location is the mitochondrion inner membrane. It localises to the nucleus. The protein localises to the cell membrane. It is found in the cytoplasm. Target of the anti-cancer drug Rocaglamide (Roc-A). Its function is as follows. Protein with pleiotropic attributes mediated in a cell-compartment- and tissue-specific manner, which include the plasma membrane-associated cell signaling functions, mitochondrial chaperone, and transcriptional co-regulator of transcription factors in the nucleus. Plays a role in adipose tissue and glucose homeostasis in a sex-specific manner. Contributes to pulmonary vascular remodeling by accelerating proliferation of pulmonary arterial smooth muscle cells. In the mitochondria, together with PHB2, forms large ring complexes (prohibitin complexes) in the inner mitochondrial membrane (IMM) and functions as a chaperone protein that stabilizes mitochondrial respiratory enzymes and maintains mitochondrial integrity in the IMM, which is required for mitochondrial morphogenesis, neuronal survival, and normal lifespan. The prohibitin complex, with DNAJC19, regulates cardiolipin remodeling and the protein turnover of OMA1 in a cardiolipin-binding manner. Regulates mitochondrial respiration activity playing a role in cellular aging. The prohibitin complex plays a role of mitophagy receptor involved in targeting mitochondria for autophagic degradation. Involved in mitochondrial-mediated antiviral innate immunity, activates RIG-I-mediated signal transduction and production of IFNB1 and pro-inflammatory cytokine IL6. In terms of biological role, in the nucleus, acts as a transcription coregulator, enhances promoter binding by TP53, a transcription factor it activates, but reduces the promoter binding by E2F1, a transcription factor it represses. Interacts with STAT3 to affect IL17 secretion in T-helper Th17 cells. Functionally, in the plasma membrane, cooperates with CD86 to mediate CD86-signaling in B lymphocytes that regulates the level of IgG1 produced through the activation of distal signaling intermediates. Upon CD40 engagement, required to activate NF-kappa-B signaling pathway via phospholipase C and protein kinase C activation. Its function is as follows. (Microbial infection) In neuronal cells, cell surface-expressed PHB1 is involved in human enterovirus 71/EV-71 entry into neuronal cells specifically, while membrane-bound mitochondrial PHB1 associates with the virus replication complex and facilitates viral replication. May serve as a receptor for EV71. The polypeptide is Prohibitin 1 (Phb1) (Mus musculus (Mouse)).